The chain runs to 470 residues: Protein nucleotidyltransferase YdiU (470 aa).

Residues G86, G88, R89, K109, D121, G122, R172, and R179 each contribute to the ATP site. D244 (proton acceptor) is an active-site residue. Mg(2+) contacts are provided by N245 and D254. Residue D254 participates in ATP binding.

It belongs to the SELO family. Requires Mg(2+) as cofactor. It depends on Mn(2+) as a cofactor.

It carries out the reaction L-seryl-[protein] + ATP = 3-O-(5'-adenylyl)-L-seryl-[protein] + diphosphate. The catalysed reaction is L-threonyl-[protein] + ATP = 3-O-(5'-adenylyl)-L-threonyl-[protein] + diphosphate. It catalyses the reaction L-tyrosyl-[protein] + ATP = O-(5'-adenylyl)-L-tyrosyl-[protein] + diphosphate. The enzyme catalyses L-histidyl-[protein] + UTP = N(tele)-(5'-uridylyl)-L-histidyl-[protein] + diphosphate. It carries out the reaction L-seryl-[protein] + UTP = O-(5'-uridylyl)-L-seryl-[protein] + diphosphate. The catalysed reaction is L-tyrosyl-[protein] + UTP = O-(5'-uridylyl)-L-tyrosyl-[protein] + diphosphate. Functionally, nucleotidyltransferase involved in the post-translational modification of proteins. It can catalyze the addition of adenosine monophosphate (AMP) or uridine monophosphate (UMP) to a protein, resulting in modifications known as AMPylation and UMPylation. This chain is Protein nucleotidyltransferase YdiU, found in Roseobacter denitrificans (strain ATCC 33942 / OCh 114) (Erythrobacter sp. (strain OCh 114)).